Reading from the N-terminus, the 97-residue chain is Protein 9b (97 aa).

The 9b domain occupies 8–97 (VPPALHLVDP…PDEFVVVTAK (90 aa)).

Homodimer.

The protein resides in the host cytoplasmic vesicle membrane. The protein localises to the host cytoplasm. The protein is Protein 9b of Bat coronavirus 279/2005 (BtCoV).